We begin with the raw amino-acid sequence, 191 residues long: Small ribosomal subunit protein eS7 (191 aa).

M1 is modified (N-acetylmethionine).

This sequence belongs to the eukaryotic ribosomal protein eS7 family.

The chain is Small ribosomal subunit protein eS7 (RPS7) from Brassica oleracea (Wild cabbage).